A 140-amino-acid polypeptide reads, in one-letter code: Endoribonuclease YbeY (140 aa).

Zn(2+) is bound by residues H100, H104, and H110.

This sequence belongs to the endoribonuclease YbeY family. It depends on Zn(2+) as a cofactor.

It localises to the cytoplasm. Its function is as follows. Single strand-specific metallo-endoribonuclease involved in late-stage 70S ribosome quality control and in maturation of the 3' terminus of the 16S rRNA. This chain is Endoribonuclease YbeY, found in Helicobacter pylori (strain Shi470).